Reading from the N-terminus, the 72-residue chain is Translation initiation factor IF-1 (72 aa).

The 72-residue stretch at methionine 1–lysine 72 folds into the S1-like domain.

It belongs to the IF-1 family. In terms of assembly, component of the 30S ribosomal translation pre-initiation complex which assembles on the 30S ribosome in the order IF-2 and IF-3, IF-1 and N-formylmethionyl-tRNA(fMet); mRNA recruitment can occur at any time during PIC assembly.

It localises to the cytoplasm. Its function is as follows. One of the essential components for the initiation of protein synthesis. Stabilizes the binding of IF-2 and IF-3 on the 30S subunit to which N-formylmethionyl-tRNA(fMet) subsequently binds. Helps modulate mRNA selection, yielding the 30S pre-initiation complex (PIC). Upon addition of the 50S ribosomal subunit IF-1, IF-2 and IF-3 are released leaving the mature 70S translation initiation complex. This chain is Translation initiation factor IF-1, found in Parabacteroides distasonis (strain ATCC 8503 / DSM 20701 / CIP 104284 / JCM 5825 / NCTC 11152).